A 110-amino-acid chain; its full sequence is uncharacterized protein (110 aa).

A signal peptide spans 1–16 (MKKILLIASMTAGLTA). Cysteine 17 carries the N-palmitoyl cysteine lipid modification. Cysteine 17 carries S-diacylglycerol cysteine lipidation.

The protein localises to the cell membrane. This is an uncharacterized protein from Salmonella typhimurium (strain LT2 / SGSC1412 / ATCC 700720).